The primary structure comprises 548 residues: Probable malate:quinone oxidoreductase (548 aa).

A disordered region spans residues 522–548 (KPQAADSTPKPQLKPKPVQKEVADIAL). Positions 539 to 548 (VQKEVADIAL) are enriched in basic and acidic residues.

This sequence belongs to the MQO family. FAD is required as a cofactor.

The enzyme catalyses (S)-malate + a quinone = a quinol + oxaloacetate. It functions in the pathway carbohydrate metabolism; tricarboxylic acid cycle; oxaloacetate from (S)-malate (quinone route): step 1/1. This Escherichia coli O9:H4 (strain HS) protein is Probable malate:quinone oxidoreductase.